Here is a 184-residue protein sequence, read N- to C-terminus: Cytochrome c homolog (184 aa).

The Cytoplasmic segment spans residues 1 to 10 (MDSFELNKIL). Residues 11-31 (GAVLGTCLILLVTSFTANALF) traverse the membrane as a helical; Signal-anchor segment. Residues 32-184 (SPKMPEKPGF…HPKPLPTASK (153 aa)) are Periplasmic-facing. 4 residues coordinate heme c: Cys84, Cys87, His88, and Met151.

It belongs to the cytochrome c family. Binds 1 heme c group covalently per subunit.

Its subcellular location is the cell membrane. In terms of biological role, may be involved in electron transfer from bc1 complex to aa3. The chain is Cytochrome c homolog (cycM) from Bradyrhizobium diazoefficiens (strain JCM 10833 / BCRC 13528 / IAM 13628 / NBRC 14792 / USDA 110).